The chain runs to 498 residues: WD repeat-containing protein 55 homolog (498 aa).

Positions Met-1–Glu-131 are disordered. Composition is skewed to acidic residues over residues Asp-12 to Met-23 and Ile-31 to Leu-48. WD repeat units lie at residues Lys-154–Leu-193, Val-198–Leu-237, Ala-241–Glu-279, Glu-282–Gln-321, Pro-324–Asp-363, and Gln-408–Glu-447.

It belongs to the WD repeat WDR55 family.

This is WD repeat-containing protein 55 homolog from Drosophila simulans (Fruit fly).